Here is a 487-residue protein sequence, read N- to C-terminus: L-tartrate/succinate antiporter (487 aa).

Helical transmembrane passes span 10-30 (YLAP…AGLE), 33-53 (TWLY…EPVP), 54-74 (GAVV…WLLF), 93-113 (WAVS…FMFG), 137-157 (TLFL…VTPS), 189-209 (IGSY…AIFL), 236-256 (FLGM…LAYV), 292-312 (LMVG…AAMV), 313-333 (GYSV…DIVS), 340-360 (VFFW…TGFI), 370-390 (SLSG…FYLL), 393-413 (FFAS…AAAL), 418-438 (IPLP…SILT), and 465-485 (IFGL…MPVV).

Belongs to the SLC13A/DASS transporter (TC 2.A.47) family. DIT1 subfamily.

Its subcellular location is the cell inner membrane. It catalyses the reaction (2R,3R)-tartrate(out) + succinate(in) = (2R,3R)-tartrate(in) + succinate(out). Its function is as follows. Catalyzes the uptake of tartrate in exchange for intracellular succinate. Essential for anaerobic L-tartrate fermentation. This is L-tartrate/succinate antiporter (ttdT) from Escherichia coli O157:H7.